The chain runs to 278 residues: MLTLNYIDPIAFELGPISVRWYGIIIAAGILLGYFIAQASVKKIGYDQDTLVDIIFWSAIFGFIVARIYFVIFQWPYYIQNPIEIPMIWHGGIAIHGGLIGGFVTGIIICKQKNINPFQIGDVIAPSMILGQGIGRWGNFMNHEAHGGPISRSVLENLHIPNFIIDNMYIDGKYYQPTFLYESLWDILGFVILILLRKHLRVGDTFCLYLIWYSIGRFFVEGMRTDSLMLTSDIRVAQLMSIILILIGVIIMIIRRVKYRSPRYKDVGPLSWPNPKVK.

Transmembrane regions (helical) follow at residues 21-41 (WYGI…QASV), 54-74 (IIFW…VIFQ), and 88-108 (IWHG…TGII). Arginine 136 provides a ligand contact to a 1,2-diacyl-sn-glycero-3-phospho-(1'-sn-glycerol). Transmembrane regions (helical) follow at residues 176-196 (QPTF…LILL) and 234-254 (IRVA…IMII).

It belongs to the Lgt family.

The protein localises to the cell membrane. The enzyme catalyses L-cysteinyl-[prolipoprotein] + a 1,2-diacyl-sn-glycero-3-phospho-(1'-sn-glycerol) = an S-1,2-diacyl-sn-glyceryl-L-cysteinyl-[prolipoprotein] + sn-glycerol 1-phosphate + H(+). Its pathway is protein modification; lipoprotein biosynthesis (diacylglyceryl transfer). Catalyzes the transfer of the diacylglyceryl group from phosphatidylglycerol to the sulfhydryl group of the N-terminal cysteine of a prolipoprotein, the first step in the formation of mature lipoproteins. This is Phosphatidylglycerol--prolipoprotein diacylglyceryl transferase from Staphylococcus xylosus.